Here is a 905-residue protein sequence, read N- to C-terminus: DNA mismatch repair protein MutS (905 aa).

The tract at residues 388-410 is disordered; that stretch reads LERPANPEGTYPTDAETSGDTLP. 638-645 contributes to the ATP binding site; sequence GPNMAGKS. The segment at 826–847 is disordered; sequence RDAARGTNSAPSRQTLPGLDLP. Residues 831–840 show a composition bias toward polar residues; it reads GTNSAPSRQT.

It belongs to the DNA mismatch repair MutS family.

This protein is involved in the repair of mismatches in DNA. It is possible that it carries out the mismatch recognition step. This protein has a weak ATPase activity. The polypeptide is DNA mismatch repair protein MutS (Nitratidesulfovibrio vulgaris (strain DP4) (Desulfovibrio vulgaris)).